The sequence spans 529 residues: Potassium voltage-gated channel subfamily A member 6 (529 aa).

The interval 1-33 is disordered; sequence MRSEKSLTLAAPGEVRGPEGEQQDAGDFPEAGG. Residues 1–171 lie on the Cytoplasmic side of the membrane; the sequence is MRSEKSLTLA…LLFEYPESSG (171 aa). The residue at position 3 (serine 3) is a Phosphoserine. Residues 172-193 form a helical membrane-spanning segment; sequence PARGIAIVSVLVILISIVIFCL. The Extracellular segment spans residues 194 to 262; that stretch reads ETLPQFRVDG…TLGGSFFTDP (69 aa). The span at 210-220 shows a compositional bias: low complexity; it reads GVSRVSPVSRG. The disordered stretch occupies residues 210–233; it reads GVSRVSPVSRGSQEEEEDEDDSYT. Residues 263-284 form a helical membrane-spanning segment; the sequence is FFLVETLCIVWFTFELLVRFSA. Cysteine 285 carries the S-palmitoyl cysteine lipid modification. At 285-295 the chain is on the cytoplasmic side; that stretch reads CPSKPAFFRNI. The chain crosses the membrane as a helical span at residues 296-316; sequence MNIIDLVAIFPYFITLGTELV. The Extracellular segment spans residues 317–337; that stretch reads QQQEQQPASGGGGQNGQQAMS. A helical; Voltage-sensor transmembrane segment spans residues 338–358; the sequence is LAILRVIRLVRVFRIFKLSRH. Topologically, residues 359–373 are cytoplasmic; the sequence is SKGLQILGKTLQASM. The S4-S5 linker stretch occupies residues 360–373; sequence KGLQILGKTLQASM. A helical membrane pass occupies residues 374–395; the sequence is RELGLLIFFLFIGVILFSSAVY. The Extracellular segment spans residues 396–409; sequence FAEADDDDSLFPSI. An intramembrane region (helical) is located at residues 410–421; it reads PDAFWWAVVTMT. The Selectivity filter signature appears at 422–427; sequence TVGYGD. The stretch at 422–429 is an intramembrane region; the sequence is TVGYGDMY. Topologically, residues 430-436 are extracellular; it reads PMTVGGK. The chain crosses the membrane as a helical span at residues 437–465; sequence IVGSLCAIAGVLTIALPVPVIVSNFNYFY. The Cytoplasmic portion of the chain corresponds to 466–529; sequence HRETEQEEQG…YAEKRMLTEV (64 aa). Positions 488–513 are disordered; sequence DLRATDNGLGKPDFPEANRERRPSYL. Positions 500–510 are enriched in basic and acidic residues; sequence DFPEANRERRP. Position 511 is a phosphoserine; by PKA (serine 511). A PDZ-binding motif is present at residues 527 to 529; that stretch reads TEV.

This sequence belongs to the potassium channel family. A (Shaker) (TC 1.A.1.2) subfamily. Kv1.6/KCNA6 sub-subfamily. Homotetramer and heterotetramer of potassium channel proteins. Interacts with KCNAB1 and KCNAB2.

Its subcellular location is the cell membrane. The catalysed reaction is K(+)(in) = K(+)(out). In terms of biological role, voltage-gated potassium channel that mediates transmembrane potassium transport in excitable membranes. Forms tetrameric potassium-selective channels through which potassium ions pass in accordance with their electrochemical gradient. The channel alternates between opened and closed conformations in response to the voltage difference across the membrane. Can form functional homotetrameric channels and heterotetrameric channels that contain variable proportions of KCNA1, KCNA2, KCNA4, KCNA6, and possibly other family members as well; channel properties depend on the type of alpha subunits that are part of the channel. Channel properties are modulated by cytoplasmic beta subunits that regulate the subcellular location of the alpha subunits and promote rapid inactivation. Homotetrameric channels display rapid activation and slow inactivation. This chain is Potassium voltage-gated channel subfamily A member 6 (KCNA6), found in Homo sapiens (Human).